We begin with the raw amino-acid sequence, 361 residues long: Aminomethyltransferase (361 aa).

It belongs to the GcvT family. As to quaternary structure, the glycine cleavage system is composed of four proteins: P, T, L and H.

It carries out the reaction N(6)-[(R)-S(8)-aminomethyldihydrolipoyl]-L-lysyl-[protein] + (6S)-5,6,7,8-tetrahydrofolate = N(6)-[(R)-dihydrolipoyl]-L-lysyl-[protein] + (6R)-5,10-methylene-5,6,7,8-tetrahydrofolate + NH4(+). The glycine cleavage system catalyzes the degradation of glycine. The protein is Aminomethyltransferase of Bacteroides fragilis (strain ATCC 25285 / DSM 2151 / CCUG 4856 / JCM 11019 / LMG 10263 / NCTC 9343 / Onslow / VPI 2553 / EN-2).